Reading from the N-terminus, the 871-residue chain is Alanine--tRNA ligase (871 aa).

Histidine 559, histidine 563, cysteine 661, and histidine 665 together coordinate Zn(2+).

Belongs to the class-II aminoacyl-tRNA synthetase family. It depends on Zn(2+) as a cofactor.

It localises to the cytoplasm. It carries out the reaction tRNA(Ala) + L-alanine + ATP = L-alanyl-tRNA(Ala) + AMP + diphosphate. In terms of biological role, catalyzes the attachment of alanine to tRNA(Ala) in a two-step reaction: alanine is first activated by ATP to form Ala-AMP and then transferred to the acceptor end of tRNA(Ala). Also edits incorrectly charged Ser-tRNA(Ala) and Gly-tRNA(Ala) via its editing domain. This chain is Alanine--tRNA ligase, found in Aquifex pyrophilus.